The following is a 106-amino-acid chain: UPF0145 protein Cthe_0398 (106 aa).

It belongs to the UPF0145 family.

This chain is UPF0145 protein Cthe_0398, found in Acetivibrio thermocellus (strain ATCC 27405 / DSM 1237 / JCM 9322 / NBRC 103400 / NCIMB 10682 / NRRL B-4536 / VPI 7372) (Clostridium thermocellum).